We begin with the raw amino-acid sequence, 603 residues long: O-acetyltransferase OatA (603 aa).

11 helical membrane-spanning segments follow: residues 17-37, 45-65, 87-107, 148-168, 177-197, 211-231, 239-259, 268-288, 311-331, 333-353, and 382-402; these read YLPG…IYHL, GFLG…SLLI, LIPA…IFKP, LWSL…ITFL, IIQT…VIHF, TRLQ…PFAL, IVVS…TLFF, IYNG…AIAV, YSLY…YVQG, IPVY…EISY, and VLVI…FDAL. Active-site residues include Ser453, Asp575, and His578.

Belongs to the acyltransferase 3 family. As to quaternary structure, monomer.

The protein resides in the cell membrane. Functionally, responsible for O-acetylation at the C(6)-hydroxyl group of N-acetylmuramyl residues, forming the corresponding N,6-O-diacetylmuramic acid of the peptidoglycan. O-acetylation of the peptidoglycan is the major determinant for lysozyme resistance. In Staphylococcus aureus (strain NCTC 8325 / PS 47), this protein is O-acetyltransferase OatA.